The chain runs to 284 residues: Release factor glutamine methyltransferase (284 aa).

S-adenosyl-L-methionine is bound by residues 125-129, E148, and N190; that span reads GVGSG. Substrate is bound at residue 190-193; sequence NPPY.

This sequence belongs to the protein N5-glutamine methyltransferase family. PrmC subfamily.

The catalysed reaction is L-glutaminyl-[peptide chain release factor] + S-adenosyl-L-methionine = N(5)-methyl-L-glutaminyl-[peptide chain release factor] + S-adenosyl-L-homocysteine + H(+). Functionally, methylates the class 1 translation termination release factors RF1/PrfA and RF2/PrfB on the glutamine residue of the universally conserved GGQ motif. The chain is Release factor glutamine methyltransferase from Geobacter sulfurreducens (strain ATCC 51573 / DSM 12127 / PCA).